Reading from the N-terminus, the 274-residue chain is MCAFVPHVPRHSRGDNPPSASTASPAVLTLTGERTIPDLDIENYWFRRHQVVYQRLAPRCTARDVLEAGCGEGYGADLIACVARQVIAVDYDETAVAHVRSRYPRVEVMQANLAELPLPDASVDVVVNFQVIEHLWDQARFVRECARVLRGSGLLMVSTPNRITFSPGRDTPINPFHTRELNADELTSLLIDAGFVDVAMCGLFHGPRLRDMDARHGGSIIDAQIMRAVAGAPWPPELAADVAAVTTADFEMVAAGHDRDIDDSLDLIAIAVRP.

Residues 1 to 24 (MCAFVPHVPRHSRGDNPPSASTAS) form a disordered region.

It belongs to the methyltransferase superfamily.

Its function is as follows. Probable S-adenosylmethionine-dependent methyltransferase required for the 6-O-methylation of the polysaccharide backbone of 6-O-methylglucosyl lipopolysaccharides (MGLP). This Mycobacterium tuberculosis (strain CDC 1551 / Oshkosh) protein is Probable S-adenosylmethionine-dependent methyltransferase MT3114.